Reading from the N-terminus, the 391-residue chain is Probable sugar efflux transporter (391 aa).

12 helical membrane passes run 16–36 (VFVF…PVAL), 51–71 (VGLM…PLML), 82–102 (LLFL…AWNF), 110–130 (MGIA…VIRV), 138–158 (QALG…LPLG), 170–190 (TFGV…KLLP), 210–230 (PLLM…FTTY), 247–267 (ITTL…FLFS), 277–297 (FIAF…VFKN), 300–320 (WVIF…TIAL), 338–358 (IFSG…SIVI), and 361–381 (LGLE…LFWL).

The protein belongs to the major facilitator superfamily. SotB (TC 2.A.1.2) family.

It localises to the cell inner membrane. Functionally, involved in the efflux of sugars. The physiological role may be the reduction of the intracellular concentration of toxic sugars or sugar metabolites. The protein is Probable sugar efflux transporter of Helicobacter pylori (strain HPAG1).